The following is a 44-amino-acid chain: Small ribosomal subunit protein eS31 (44 aa).

4 residues coordinate Zn(2+): C18, C21, C35, and C38. The segment at 18–38 (CPRCGDTFLAAHDDRQVCGRC) adopts a C4-type zinc-finger fold.

The protein belongs to the eukaryotic ribosomal protein eS31 family. Part of the 30S ribosomal subunit. Zn(2+) serves as cofactor.

The chain is Small ribosomal subunit protein eS31 from Halobacterium salinarum (strain ATCC 29341 / DSM 671 / R1).